Reading from the N-terminus, the 328-residue chain is uncharacterized protein (328 aa).

Positions 72–91 (ALQIRDKFNLQRVIIVPDGE) form a DNA-binding region, H-T-H motif.

The protein belongs to the SorC transcriptional regulatory family.

This is an uncharacterized protein from Escherichia coli (strain K12).